The sequence spans 463 residues: 23S rRNA (uracil(1939)-C(5))-methyltransferase RlmD (463 aa).

One can recognise a TRAM domain in the interval 14 to 78 (AVAPGSDPVV…PSYEQAHLLE (65 aa)). [4Fe-4S] cluster is bound by residues cysteine 91, cysteine 97, cysteine 100, and cysteine 179. Residues glutamine 287, phenylalanine 316, asparagine 321, glutamate 337, asparagine 365, and aspartate 386 each contribute to the S-adenosyl-L-methionine site. Cysteine 419 functions as the Nucleophile in the catalytic mechanism.

The protein belongs to the class I-like SAM-binding methyltransferase superfamily. RNA M5U methyltransferase family. RlmD subfamily.

The catalysed reaction is uridine(1939) in 23S rRNA + S-adenosyl-L-methionine = 5-methyluridine(1939) in 23S rRNA + S-adenosyl-L-homocysteine + H(+). In terms of biological role, catalyzes the formation of 5-methyl-uridine at position 1939 (m5U1939) in 23S rRNA. This chain is 23S rRNA (uracil(1939)-C(5))-methyltransferase RlmD, found in Cupriavidus pinatubonensis (strain JMP 134 / LMG 1197) (Cupriavidus necator (strain JMP 134)).